Reading from the N-terminus, the 152-residue chain is ADP-ribose glycohydrolase OARD1 (152 aa).

Ala-2 is modified (N-acetylalanine). Positions 2–152 constitute a Macro domain; that stretch reads AGSPNEDSEG…TDIRITVYTL (151 aa). Ser-4 is subject to Phosphoserine. Substrate is bound at residue Leu-21. The active-site Nucleophile is Lys-84. Substrate contacts are provided by residues 119–125 and Leu-152; that span reads RIGCGLD. The active-site Proton acceptor is Asp-125.

It is found in the nucleus. The protein localises to the nucleoplasm. It localises to the nucleolus. Its subcellular location is the chromosome. It carries out the reaction 2''-O-acetyl-ADP-D-ribose + H2O = ADP-D-ribose + acetate + H(+). The catalysed reaction is 5-O-(ADP-D-ribosyl)-L-glutamyl-[protein] + H2O = L-glutamyl-[protein] + ADP-D-ribose + H(+). The enzyme catalyses alpha-NAD(+) + H2O = ADP-D-ribose + nicotinamide + H(+). Subject to competitive inhibition by the product ADP-ribose. Functionally, ADP-ribose glycohydrolase that hydrolyzes ADP-ribose and acts on different substrates, such as proteins ADP-ribosylated on glutamate and O-acetyl-ADP-D-ribose. Specifically acts as a glutamate mono-ADP-ribosylhydrolase by mediating the removal of mono-ADP-ribose attached to glutamate residues on proteins. Does not act on poly-ADP-ribosylated proteins: the poly-ADP-ribose chain of poly-ADP-ribosylated glutamate residues must by hydrolyzed into mono-ADP-ribosylated glutamate by PARG to become a substrate for OARD1. Deacetylates O-acetyl-ADP ribose, a signaling molecule generated by the deacetylation of acetylated lysine residues in histones and other proteins. Catalyzes the deacylation of O-acetyl-ADP-ribose, O-propionyl-ADP-ribose and O-butyryl-ADP-ribose, yielding ADP-ribose plus acetate, propionate and butyrate, respectively. This is ADP-ribose glycohydrolase OARD1 from Bos taurus (Bovine).